Consider the following 159-residue polypeptide: 6,7-dimethyl-8-ribityllumazine synthase (159 aa).

5-amino-6-(D-ribitylamino)uracil contacts are provided by residues W26, 58–60, and 80–82; these read SFE and VVI. A (2S)-2-hydroxy-3-oxobutyl phosphate-binding site is contributed by 85 to 86; that stretch reads GT. The active-site Proton donor is H88. F113 provides a ligand contact to 5-amino-6-(D-ribitylamino)uracil. R127 is a binding site for (2S)-2-hydroxy-3-oxobutyl phosphate.

Belongs to the DMRL synthase family.

It catalyses the reaction (2S)-2-hydroxy-3-oxobutyl phosphate + 5-amino-6-(D-ribitylamino)uracil = 6,7-dimethyl-8-(1-D-ribityl)lumazine + phosphate + 2 H2O + H(+). Its pathway is cofactor biosynthesis; riboflavin biosynthesis; riboflavin from 2-hydroxy-3-oxobutyl phosphate and 5-amino-6-(D-ribitylamino)uracil: step 1/2. Functionally, catalyzes the formation of 6,7-dimethyl-8-ribityllumazine by condensation of 5-amino-6-(D-ribitylamino)uracil with 3,4-dihydroxy-2-butanone 4-phosphate. This is the penultimate step in the biosynthesis of riboflavin. The polypeptide is 6,7-dimethyl-8-ribityllumazine synthase (Renibacterium salmoninarum (strain ATCC 33209 / DSM 20767 / JCM 11484 / NBRC 15589 / NCIMB 2235)).